Consider the following 258-residue polypeptide: Thiamine thiazole synthase (258 aa).

NAD(+)-binding positions include A36, 55-56 (EK), G63, V127, and 154-156 (HVD). The Fe cation site is built by D156 and H171. Residue M224 participates in NAD(+) binding. Residue R234 participates in glycine binding.

This sequence belongs to the THI4 family. As to quaternary structure, homooctamer; tetramer of dimers. Requires Fe(2+) as cofactor.

It catalyses the reaction hydrogen sulfide + glycine + NAD(+) = ADP-5-ethyl-4-methylthiazole-2-carboxylate + nicotinamide + 3 H2O + H(+). Its pathway is cofactor biosynthesis; thiamine diphosphate biosynthesis. Its function is as follows. Involved in the biosynthesis of the thiazole moiety of thiamine. Catalyzes the conversion of NAD and glycine to adenosine diphosphate 5-(2-hydroxyethyl)-4-methylthiazole-2-carboxylate (ADT), an adenylated thiazole intermediate, using free sulfide as a source of sulfur. In Methanococcoides burtonii (strain DSM 6242 / NBRC 107633 / OCM 468 / ACE-M), this protein is Thiamine thiazole synthase.